Reading from the N-terminus, the 404-residue chain is Probable tRNA sulfurtransferase (404 aa).

A THUMP domain is found at 61–166; sequence EAVSERLKDV…SGYSYIMCDE (106 aa). ATP-binding positions include 184 to 185, 209 to 210, arginine 266, glycine 288, and glutamine 297; these read LL and HF.

Belongs to the ThiI family.

It localises to the cytoplasm. The catalysed reaction is [ThiI sulfur-carrier protein]-S-sulfanyl-L-cysteine + a uridine in tRNA + 2 reduced [2Fe-2S]-[ferredoxin] + ATP + H(+) = [ThiI sulfur-carrier protein]-L-cysteine + a 4-thiouridine in tRNA + 2 oxidized [2Fe-2S]-[ferredoxin] + AMP + diphosphate. The enzyme catalyses [ThiS sulfur-carrier protein]-C-terminal Gly-Gly-AMP + S-sulfanyl-L-cysteinyl-[cysteine desulfurase] + AH2 = [ThiS sulfur-carrier protein]-C-terminal-Gly-aminoethanethioate + L-cysteinyl-[cysteine desulfurase] + A + AMP + 2 H(+). The protein operates within cofactor biosynthesis; thiamine diphosphate biosynthesis. Catalyzes the ATP-dependent transfer of a sulfur to tRNA to produce 4-thiouridine in position 8 of tRNAs, which functions as a near-UV photosensor. Also catalyzes the transfer of sulfur to the sulfur carrier protein ThiS, forming ThiS-thiocarboxylate. This is a step in the synthesis of thiazole, in the thiamine biosynthesis pathway. The sulfur is donated as persulfide by IscS. The chain is Probable tRNA sulfurtransferase from Bacillus cereus (strain ATCC 10987 / NRS 248).